A 284-amino-acid chain; its full sequence is D-tagatose-1,6-bisphosphate aldolase subunit GatY (284 aa).

The active-site Proton donor is the Asp82. Positions 83 and 180 each coordinate Zn(2+). Dihydroxyacetone phosphate is bound at residue Gly181. His208 is a Zn(2+) binding site. Dihydroxyacetone phosphate is bound by residues 209–211 (GAS) and 230–233 (NVAT).

The protein belongs to the class II fructose-bisphosphate aldolase family. TagBP aldolase GatY subfamily. Forms a complex with GatZ. Zn(2+) is required as a cofactor.

The catalysed reaction is D-tagatofuranose 1,6-bisphosphate = D-glyceraldehyde 3-phosphate + dihydroxyacetone phosphate. It functions in the pathway carbohydrate metabolism; D-tagatose 6-phosphate degradation; D-glyceraldehyde 3-phosphate and glycerone phosphate from D-tagatose 6-phosphate: step 2/2. Catalytic subunit of the tagatose-1,6-bisphosphate aldolase GatYZ, which catalyzes the reversible aldol condensation of dihydroxyacetone phosphate (DHAP or glycerone-phosphate) with glyceraldehyde 3-phosphate (G3P) to produce tagatose 1,6-bisphosphate (TBP). Requires GatZ subunit for full activity and stability. Is involved in the catabolism of galactitol. The polypeptide is D-tagatose-1,6-bisphosphate aldolase subunit GatY (Escherichia coli O6:K15:H31 (strain 536 / UPEC)).